The following is a 758-amino-acid chain: Probable adenosylcobalamin-dependent ribonucleoside-triphosphate reductase (758 aa).

Cysteine 194 and cysteine 459 are disulfide-bonded. Residues 233–256 (IIIKGQLPPPPPQQQPQQQQQQHG) are disordered. Active-site residues include cysteine 448 and glutamate 450.

Belongs to the class II ribonucleoside-triphosphate reductase family. In terms of assembly, monomer. It depends on adenosylcob(III)alamin as a cofactor.

The catalysed reaction is a 2'-deoxyribonucleoside 5'-triphosphate + [thioredoxin]-disulfide + H2O = a ribonucleoside 5'-triphosphate + [thioredoxin]-dithiol. The sequence is that of Probable adenosylcobalamin-dependent ribonucleoside-triphosphate reductase (rtpR) from Dictyostelium discoideum (Social amoeba).